A 110-amino-acid chain; its full sequence is tRNA-binding protein YgjH (110 aa).

The tRNA-binding domain maps to 8–110 (DFARLEMRVG…RMMPAGVRVV (103 aa)).

Homodimer.

The chain is tRNA-binding protein YgjH (ygjH) from Escherichia coli (strain K12).